The sequence spans 370 residues: Metalloproteinase (370 aa).

The N-terminal stretch at M1 to A15 is a signal peptide. The region spanning I170–F370 is the Peptidase M12B domain. N-linked (GalNAc...) asparagine glycosylation is present at N226. Position 320 (H320) interacts with Zn(2+). E321 is a catalytic residue. H324 and H330 together coordinate Zn(2+).

The protein belongs to the venom metalloproteinase (M12B) family. As to expression, expressed by the venom gland.

Its subcellular location is the secreted. Metalloprotease that may disrupt the cell matrix and the process of clotting blood or hemolymph. In Tityus obscurus (Amazonian scorpion), this protein is Metalloproteinase.